Reading from the N-terminus, the 320-residue chain is Acetyl-coenzyme A carboxylase carboxyl transferase subunit alpha (320 aa).

Positions 41 to 295 (SIEEKAAQAL…GDAIAGALND (255 aa)) constitute a CoA carboxyltransferase C-terminal domain.

The protein belongs to the AccA family. Acetyl-CoA carboxylase is a heterohexamer composed of biotin carboxyl carrier protein (AccB), biotin carboxylase (AccC) and two subunits each of ACCase subunit alpha (AccA) and ACCase subunit beta (AccD).

The protein localises to the cytoplasm. The enzyme catalyses N(6)-carboxybiotinyl-L-lysyl-[protein] + acetyl-CoA = N(6)-biotinyl-L-lysyl-[protein] + malonyl-CoA. It participates in lipid metabolism; malonyl-CoA biosynthesis; malonyl-CoA from acetyl-CoA: step 1/1. Functionally, component of the acetyl coenzyme A carboxylase (ACC) complex. First, biotin carboxylase catalyzes the carboxylation of biotin on its carrier protein (BCCP) and then the CO(2) group is transferred by the carboxyltransferase to acetyl-CoA to form malonyl-CoA. The protein is Acetyl-coenzyme A carboxylase carboxyl transferase subunit alpha of Nitrobacter winogradskyi (strain ATCC 25391 / DSM 10237 / CIP 104748 / NCIMB 11846 / Nb-255).